The chain runs to 744 residues: FNIP repeat-containing protein cigB (744 aa).

FNIP repeat units lie at residues 340–376 (FNQK…TVTT), 383–422 (FNQK…TVIL), 426–462 (FNQK…TVTR), 469–508 (FNQK…TITL), 512–550 (FNQK…TTVR), 555–594 (FNQK…TVIL), 598–635 (FNQK…VTTV), 641–678 (FNQK…VTTV), and 684–723 (FNQK…NVYI).

The protein is FNIP repeat-containing protein cigB (cigB) of Dictyostelium discoideum (Social amoeba).